The chain runs to 393 residues: Phosphopentomutase (393 aa).

Residues Asp14, Asp287, His292, Asp328, His329, and His340 each contribute to the Mn(2+) site.

It belongs to the phosphopentomutase family. Mn(2+) serves as cofactor.

The protein resides in the cytoplasm. It carries out the reaction 2-deoxy-alpha-D-ribose 1-phosphate = 2-deoxy-D-ribose 5-phosphate. It catalyses the reaction alpha-D-ribose 1-phosphate = D-ribose 5-phosphate. The protein operates within carbohydrate degradation; 2-deoxy-D-ribose 1-phosphate degradation; D-glyceraldehyde 3-phosphate and acetaldehyde from 2-deoxy-alpha-D-ribose 1-phosphate: step 1/2. Its function is as follows. Isomerase that catalyzes the conversion of deoxy-ribose 1-phosphate (dRib-1-P) and ribose 1-phosphate (Rib-1-P) to deoxy-ribose 5-phosphate (dRib-5-P) and ribose 5-phosphate (Rib-5-P), respectively. The chain is Phosphopentomutase from Geobacillus stearothermophilus (Bacillus stearothermophilus).